The sequence spans 165 residues: Transcription antitermination protein NusB (165 aa).

The disordered stretch occupies residues 1–20; it reads MSDVENGGEPRQPSVKPANQ.

This sequence belongs to the NusB family.

In terms of biological role, involved in transcription antitermination. Required for transcription of ribosomal RNA (rRNA) genes. Binds specifically to the boxA antiterminator sequence of the ribosomal RNA (rrn) operons. This chain is Transcription antitermination protein NusB, found in Agrobacterium fabrum (strain C58 / ATCC 33970) (Agrobacterium tumefaciens (strain C58)).